We begin with the raw amino-acid sequence, 109 residues long: Keratin, type II microfibrillar (109 aa).

Positions 1-10 are linker 1; it reads QNRQCCESNL. One can recognise an IF rod domain in the interval 1–109; it reads QNRQCCESNL…RLYEEEIRVL (109 aa). The interval 11 to 109 is coil 1B; it reads EPLFSGYIET…RLYEEEIRVL (99 aa).

Belongs to the intermediate filament family.

In terms of biological role, wool microfibrillar keratin. The protein is Keratin, type II microfibrillar of Ovis aries (Sheep).